Here is a 221-residue protein sequence, read N- to C-terminus: Jacalin-related lectin 47 (221 aa).

2 Jacalin-type lectin domains span residues 1-64 (MDSN…YYYP) and 71-217 (SEKL…HVLP).

Belongs to the jacalin lectin family.

This chain is Jacalin-related lectin 47 (JAL47), found in Arabidopsis thaliana (Mouse-ear cress).